The following is a 366-amino-acid chain: 4-hydroxy-3-methylbut-2-en-1-yl diphosphate synthase (flavodoxin) (366 aa).

The [4Fe-4S] cluster site is built by Cys-270, Cys-273, Cys-305, and Glu-312.

The protein belongs to the IspG family. The cofactor is [4Fe-4S] cluster.

The enzyme catalyses (2E)-4-hydroxy-3-methylbut-2-enyl diphosphate + oxidized [flavodoxin] + H2O + 2 H(+) = 2-C-methyl-D-erythritol 2,4-cyclic diphosphate + reduced [flavodoxin]. Its pathway is isoprenoid biosynthesis; isopentenyl diphosphate biosynthesis via DXP pathway; isopentenyl diphosphate from 1-deoxy-D-xylulose 5-phosphate: step 5/6. Functionally, converts 2C-methyl-D-erythritol 2,4-cyclodiphosphate (ME-2,4cPP) into 1-hydroxy-2-methyl-2-(E)-butenyl 4-diphosphate. The protein is 4-hydroxy-3-methylbut-2-en-1-yl diphosphate synthase (flavodoxin) of Wigglesworthia glossinidia brevipalpis.